Reading from the N-terminus, the 301-residue chain is Probable aspartoacylase (301 aa).

Zn(2+) is bound by residues His-13 and Glu-16. Substrate-binding positions include Arg-54 and 61–62 (NR). His-105 serves as a coordination point for Zn(2+). Glu-163 and Tyr-273 together coordinate substrate.

It belongs to the AspA/AstE family. Aspartoacylase subfamily. Zn(2+) is required as a cofactor.

The enzyme catalyses an N-acyl-L-aspartate + H2O = a carboxylate + L-aspartate. The polypeptide is Probable aspartoacylase (Prochlorococcus marinus (strain AS9601)).